Consider the following 295-residue polypeptide: Secreted frizzled-related protein 2 (295 aa).

The N-terminal stretch at 1–24 (MPRGPASLLLLVLASHCCLGSARG) is a signal peptide. The 121-residue stretch at 35–155 (YKRSNCKPIP…PQDNDLCIPL (121 aa)) folds into the FZ domain. Intrachain disulfides connect cysteine 40–cysteine 103, cysteine 50–cysteine 96, cysteine 87–cysteine 125, cysteine 114–cysteine 152, cysteine 118–cysteine 142, cysteine 172–cysteine 245, cysteine 175–cysteine 247, and cysteine 190–cysteine 295. Residues 172-295 (CEACKTKNED…ISRSIRKLQC (124 aa)) form the NTR domain.

This sequence belongs to the secreted frizzled-related protein (sFRP) family. As to expression, highly expressed in the eye. Weaker expression in heart and lung.

The protein localises to the secreted. In terms of biological role, soluble frizzled-related proteins (sFRPS) function as modulators of Wnt signaling through direct interaction with Wnts. They have a role in regulating cell growth and differentiation in specific cell types. SFRP2 may be important for eye retinal development and for myogenesis. The sequence is that of Secreted frizzled-related protein 2 from Mus musculus (Mouse).